The sequence spans 300 residues: tRNA dimethylallyltransferase 2 (300 aa).

An ATP-binding site is contributed by 13 to 20 (GPTGVGKT). 15–20 (TGVGKT) provides a ligand contact to substrate. Residues 38-41 (DSRQ) form an interaction with substrate tRNA region.

It belongs to the IPP transferase family. Monomer. The cofactor is Mg(2+).

It catalyses the reaction adenosine(37) in tRNA + dimethylallyl diphosphate = N(6)-dimethylallyladenosine(37) in tRNA + diphosphate. In terms of biological role, catalyzes the transfer of a dimethylallyl group onto the adenine at position 37 in tRNAs that read codons beginning with uridine, leading to the formation of N6-(dimethylallyl)adenosine (i(6)A). The polypeptide is tRNA dimethylallyltransferase 2 (Porphyromonas gingivalis (strain ATCC 33277 / DSM 20709 / CIP 103683 / JCM 12257 / NCTC 11834 / 2561)).